A 376-amino-acid polypeptide reads, in one-letter code: Chaperone protein DnaJ (376 aa).

Residues 5–70 (DFYETLGVAK…QKRAAYDRYG (66 aa)) form the J domain. The CR-type zinc finger occupies 137–215 (GKTAQIRVPT…CHGQGRVTEE (79 aa)). Positions 150, 153, 167, 170, 189, 192, 203, and 206 each coordinate Zn(2+). CXXCXGXG motif repeat units follow at residues 150–157 (CDVCSGSG), 167–174 (CGTCQGSG), 189–196 (CPTCHGRG), and 203–210 (CPKCHGQG).

Belongs to the DnaJ family. In terms of assembly, homodimer. Zn(2+) serves as cofactor.

Its subcellular location is the cytoplasm. Functionally, participates actively in the response to hyperosmotic and heat shock by preventing the aggregation of stress-denatured proteins and by disaggregating proteins, also in an autonomous, DnaK-independent fashion. Unfolded proteins bind initially to DnaJ; upon interaction with the DnaJ-bound protein, DnaK hydrolyzes its bound ATP, resulting in the formation of a stable complex. GrpE releases ADP from DnaK; ATP binding to DnaK triggers the release of the substrate protein, thus completing the reaction cycle. Several rounds of ATP-dependent interactions between DnaJ, DnaK and GrpE are required for fully efficient folding. Also involved, together with DnaK and GrpE, in the DNA replication of plasmids through activation of initiation proteins. The chain is Chaperone protein DnaJ from Rhizobium leguminosarum bv. trifolii (strain WSM2304).